Reading from the N-terminus, the 262-residue chain is Phosphatidylglycerol--prolipoprotein diacylglyceryl transferase (262 aa).

4 helical membrane passes run 9–29 (LGPL…ILAV), 41–61 (IIPD…ILGA), 80–100 (IFAI…GALV), and 109–129 (LINT…AQSL). Residue Arg131 coordinates a 1,2-diacyl-sn-glycero-3-phospho-(1'-sn-glycerol). Helical transmembrane passes span 167–187 (QPTF…ILIF), 197–217 (GHIT…IEGM), and 227–247 (LRVS…IVIY).

The protein belongs to the Lgt family.

It is found in the cell membrane. The enzyme catalyses L-cysteinyl-[prolipoprotein] + a 1,2-diacyl-sn-glycero-3-phospho-(1'-sn-glycerol) = an S-1,2-diacyl-sn-glyceryl-L-cysteinyl-[prolipoprotein] + sn-glycerol 1-phosphate + H(+). The protein operates within protein modification; lipoprotein biosynthesis (diacylglyceryl transfer). Functionally, catalyzes the transfer of the diacylglyceryl group from phosphatidylglycerol to the sulfhydryl group of the N-terminal cysteine of a prolipoprotein, the first step in the formation of mature lipoproteins. The protein is Phosphatidylglycerol--prolipoprotein diacylglyceryl transferase of Streptococcus pneumoniae (strain JJA).